Reading from the N-terminus, the 71-residue chain is Small ribosomal subunit protein bS21 (71 aa).

Belongs to the bacterial ribosomal protein bS21 family.

This is Small ribosomal subunit protein bS21 from Buchnera aphidicola subsp. Schizaphis graminum (strain Sg).